Here is a 101-residue protein sequence, read N- to C-terminus: Protein translation factor SUI1 homolog (101 aa).

Belongs to the SUI1 family.

This Methanothermobacter thermautotrophicus (strain ATCC 29096 / DSM 1053 / JCM 10044 / NBRC 100330 / Delta H) (Methanobacterium thermoautotrophicum) protein is Protein translation factor SUI1 homolog.